Reading from the N-terminus, the 76-residue chain is Protein CsbA (76 aa).

Residues methionine 1–alanine 5 are Extracellular-facing. A helical membrane pass occupies residues valine 6 to valine 22. The Cytoplasmic segment spans residues threonine 23–tyrosine 27. The helical transmembrane segment at valine 28–glycine 44 threads the bilayer. Residues tyrosine 45–tyrosine 49 lie on the Extracellular side of the membrane. The chain crosses the membrane as a helical span at residues phenylalanine 50–methionine 66. Residues alanine 67–glutamate 76 lie on the Cytoplasmic side of the membrane.

The protein localises to the cell membrane. The polypeptide is Protein CsbA (csbA) (Bacillus subtilis (strain 168)).